A 56-amino-acid polypeptide reads, in one-letter code: MAVQQNKKSRSKRGMRRSHDALSTAQLSVDATSGELHLRHNVTADGFYRGKKVINK.

The tract at residues 1 to 26 (MAVQQNKKSRSKRGMRRSHDALSTAQ) is disordered. Positions 7–16 (KKSRSKRGMR) are enriched in basic residues.

Belongs to the bacterial ribosomal protein bL32 family.

The polypeptide is Large ribosomal subunit protein bL32 (Shewanella denitrificans (strain OS217 / ATCC BAA-1090 / DSM 15013)).